A 381-amino-acid chain; its full sequence is Acetylornithine deacetylase (381 aa).

His-79 contributes to the Zn(2+) binding site. The active site involves Asp-81. Residue Asp-111 coordinates Zn(2+). The active site involves Glu-143. Glu-144, Glu-168, and His-354 together coordinate Zn(2+).

Belongs to the peptidase M20A family. ArgE subfamily. Homodimer. Requires Zn(2+) as cofactor. Co(2+) is required as a cofactor. Glutathione serves as cofactor.

Its subcellular location is the cytoplasm. It carries out the reaction N(2)-acetyl-L-ornithine + H2O = L-ornithine + acetate. It functions in the pathway amino-acid biosynthesis; L-arginine biosynthesis; L-ornithine from N(2)-acetyl-L-ornithine (linear): step 1/1. Functionally, catalyzes the hydrolysis of the amide bond of N(2)-acetylated L-amino acids. Cleaves the acetyl group from N-acetyl-L-ornithine to form L-ornithine, an intermediate in L-arginine biosynthesis pathway, and a branchpoint in the synthesis of polyamines. The chain is Acetylornithine deacetylase from Buchnera aphidicola subsp. Schizaphis graminum (strain Sg).